We begin with the raw amino-acid sequence, 56 residues long: Stable protein 1 (56 aa).

The Stress-response A/B barrel domain occupies 1-44 (GYTHAFESTFESKSGLQEYLDSAALAAFAEGFLPTLSQRSFNWG).

The chain is Stable protein 1 from Populus euphratica (Euphrates poplar).